The chain runs to 557 residues: uncharacterized protein (557 aa).

The stretch at 2 to 45 (NEDETSILNKKMEKIEVEMAEFERLGAEREKEAVERIVQEENQN) forms a coiled coil. Disordered regions lie at residues 39–62 (VQEE…KSRK), 101–127 (NRTY…RKNF), 356–402 (PSPS…YPSN), and 536–557 (ANAT…YDHI). Composition is skewed to polar residues over residues 101-110 (NRTYYKNSQG), 358-380 (PSFQ…SSNA), 390-400 (DSATYPTSIYP), and 536-548 (ANAT…NLDT).

It is found in the cytoplasm. Its subcellular location is the nucleus. This is an uncharacterized protein from Schizosaccharomyces pombe (strain 972 / ATCC 24843) (Fission yeast).